Reading from the N-terminus, the 210-residue chain is Large ribosomal subunit protein uL3 (210 aa).

The protein belongs to the universal ribosomal protein uL3 family. As to quaternary structure, part of the 50S ribosomal subunit. Forms a cluster with proteins L14 and L19.

Its function is as follows. One of the primary rRNA binding proteins, it binds directly near the 3'-end of the 23S rRNA, where it nucleates assembly of the 50S subunit. The sequence is that of Large ribosomal subunit protein uL3 from Geobacter metallireducens (strain ATCC 53774 / DSM 7210 / GS-15).